Consider the following 158-residue polypeptide: Transcription elongation factor GreA (158 aa).

A coiled-coil region spans residues 47–73 (AEYHAAREKQSFIEGRIQELQAKLARA).

The protein belongs to the GreA/GreB family.

In terms of biological role, necessary for efficient RNA polymerase transcription elongation past template-encoded arresting sites. The arresting sites in DNA have the property of trapping a certain fraction of elongating RNA polymerases that pass through, resulting in locked ternary complexes. Cleavage of the nascent transcript by cleavage factors such as GreA or GreB allows the resumption of elongation from the new 3'terminus. GreA releases sequences of 2 to 3 nucleotides. The protein is Transcription elongation factor GreA of Thermodesulfovibrio yellowstonii (strain ATCC 51303 / DSM 11347 / YP87).